Consider the following 199-residue polypeptide: Proteasome subunit beta type-2-B (199 aa).

Methionine 1 is subject to N-acetylmethionine.

This sequence belongs to the peptidase T1B family. As to quaternary structure, component of the 20S core complex of the 26S proteasome. The 26S proteasome is composed of a core protease (CP), known as the 20S proteasome, capped at one or both ends by the 19S regulatory particle (RP/PA700). The 20S proteasome core is composed of 28 subunits that are arranged in four stacked rings, resulting in a barrel-shaped structure. The two end rings are each formed by seven alpha subunits, and the two central rings are each formed by seven beta subunits. The catalytic chamber with the active sites is on the inside of the barrel. In terms of tissue distribution, ubiquitous low levels, higher expression in siliques and flowers.

The protein resides in the cytoplasm. Its subcellular location is the nucleus. Functionally, non-catalytic component of the proteasome, a multicatalytic proteinase complex which is characterized by its ability to cleave peptides with Arg, Phe, Tyr, Leu, and Glu adjacent to the leaving group at neutral or slightly basic pH. The proteasome has an ATP-dependent proteolytic activity. The protein is Proteasome subunit beta type-2-B (PBD2) of Arabidopsis thaliana (Mouse-ear cress).